The chain runs to 1669 residues: Polycomb group protein Asx (1669 aa).

A disordered region spans residues 90 to 109; sequence IPPEKKPMAPSEEAAVSTAP. Residues 215 to 338 form the DEUBAD domain; the sequence is PDSILASTNL…FEPFWGEKNS (124 aa). Short sequence motifs (LXXLL motif) lie at residues 224-228 and 244-248; these read LRALL and LIQLL. The NEF motif signature appears at 283–285; it reads NEF. The segment covering 336-352 has biased composition (basic and acidic residues); it reads KNSRGKDKDKLESDCKN. Disordered regions lie at residues 336-378, 410-478, 635-718, 952-972, 1174-1193, 1398-1437, 1482-1505, and 1587-1610; these read KNSR…QQAT, SSTF…IVPN, FFTS…SAGA, MPHQ…QQQR, QQQS…QQQL, PGPG…PEQL, LHSI…TAGS, and SPTA…QHQH. 3 stretches are compositionally biased toward polar residues: residues 367 to 378, 413 to 425, and 434 to 450; these read ATSQQKPLQQAT, FPPT…VLNE, and PSSS…TIAT. Residues 465 to 474 show a composition bias toward basic and acidic residues; the sequence is KDSKQPKMDE. The span at 635–650 shows a compositional bias: low complexity; sequence FFTSSSSSNTATTAAN. A compositionally biased stretch (basic and acidic residues) spans 651-661; the sequence is KLEEHSDKPED. The span at 666–718 shows a compositional bias: low complexity; sequence IASSISGSTPASSITSTSCTSSSSSSASMSSSCSSSNSGSTTTAPTTSSSAGA. Composition is skewed to low complexity over residues 1174-1192 and 1404-1436; these read QQQS…QQQQ and TATA…APEQ. The span at 1592–1610 shows a compositional bias: low complexity; the sequence is PSPINQQPQSQPTGTQHQH. Residues 1602-1666 form a PHD-type; atypical zinc finger; it reads QPTGTQHQHP…IGAAKLCVAC (65 aa).

This sequence belongs to the Asx family. In terms of assembly, component of the polycomb repressive deubiquitinase (PR-DUB) complex, at least composed of caly/calypso, Asx and sba (MBD5/6 homolog). Interacts (via DEUBAD domain) with caly/calypso (via ULD domain); the interaction produces a stable heterodimer with a composite binding site for ubiquitin. Two copies of the caly-Asx heterodimer assemble into a bidentate tetramer. Interacts (via PHD domain) with sba (probably via MBD domain); the interaction is important for the stability of the PR-DUB complex. Interacts with tant. Interacts with cyclin CycG. In terms of tissue distribution, highly expressed in nurse cells and deposited in oocytes late in oogenesis. Ubiquitous in early embryos. Late embryos show higher levels in CNS and neurectoderm.

Its subcellular location is the nucleus. The protein resides in the chromosome. Its function is as follows. Non-catalytic component of the polycomb repressive deubiquitinase (PR-DUB) complex, a complex that specifically mediates deubiquitination of histone H2A monoubiquitinated at 'Lys-119' (H2AK118ub1). Activator of the PR-DUB complex involved in ubiquitin binding and allosteric activation of calypso deubiquitinase activity. PR-DUB does not deubiquitinate monoubiquitinated histone H2B. PR-DUB is required to maintain the transcriptionally repressive state of homeotic genes throughout development. The PR-DUB complex has weak or no activity toward 'Lys-48'- and 'Lys-63'-linked polyubiquitin chains. Atypical Polycomb group protein, which may be involved in both Polycomb group (PcG) and trithorax group (trxG) complexes. PcG and trxG proteins act by forming multiprotein complexes, which are respectively required to maintain the transcriptionally repressive and transcriptionally active state of homeotic genes throughout development. PcG and trxG protein complexes are not required to initiate repression and activation, but to maintain it during later stages of development. This Drosophila melanogaster (Fruit fly) protein is Polycomb group protein Asx.